Reading from the N-terminus, the 117-residue chain is Aspartate 1-decarboxylase (117 aa).

The active-site Schiff-base intermediate with substrate; via pyruvic acid is the serine 25. Serine 25 is subject to Pyruvic acid (Ser). Threonine 57 is a binding site for substrate. The Proton donor role is filled by tyrosine 58. Position 73 to 75 (73 to 75 (GAA)) interacts with substrate.

It belongs to the PanD family. In terms of assembly, heterooctamer of four alpha and four beta subunits. Pyruvate serves as cofactor. Post-translationally, is synthesized initially as an inactive proenzyme, which is activated by self-cleavage at a specific serine bond to produce a beta-subunit with a hydroxyl group at its C-terminus and an alpha-subunit with a pyruvoyl group at its N-terminus.

Its subcellular location is the cytoplasm. The enzyme catalyses L-aspartate + H(+) = beta-alanine + CO2. Its pathway is cofactor biosynthesis; (R)-pantothenate biosynthesis; beta-alanine from L-aspartate: step 1/1. In terms of biological role, catalyzes the pyruvoyl-dependent decarboxylation of aspartate to produce beta-alanine. This is Aspartate 1-decarboxylase from Bacteroides thetaiotaomicron (strain ATCC 29148 / DSM 2079 / JCM 5827 / CCUG 10774 / NCTC 10582 / VPI-5482 / E50).